The chain runs to 498 residues: NAC domain-containing protein 75 (498 aa).

The NAC domain occupies 48–215; sequence LPAGVKFDPT…ELVVSKIFYQ (168 aa). The DNA-binding element occupies 166 to 221; it reads KGCKKILVLYTNFGKNRKPEKTNWVMHQYHLGTHEEEKEGELVVSKIFYQTQPRQC. 4 disordered regions span residues 225–278, 338–374, 423–443, and 457–498; these read SSTS…PNRS, VMAE…QRHH, QQQL…GGRS, and STTH…DHHG. The segment covering 233–248 has biased composition (gly residues); it reads IGGGGGEASSGGGGGE. Residues 256–266 are compositionally biased toward low complexity; it reads GTTSGGSCSSS. Basic residues predominate over residues 356–374; the sequence is HMAHDHHHHHHQQQQQRHH. Positions 466–475 are enriched in polar residues; sequence GSSSMGNQQE.

As to expression, expressed in the vascular cylinder of roots. Expressed in the differentiation zone of the root stele.

Its subcellular location is the nucleus. In terms of biological role, transcription activator involved in xylem formation. Promotes the expression of the secondary wall-associated transcription factor MYB46. Functions upstream of NAC030/VND7, a master switch of xylem vessel differentiation. Acts as a upstream regulator of NAC101/VND6 and LBD30/ASL19. This Arabidopsis thaliana (Mouse-ear cress) protein is NAC domain-containing protein 75.